Consider the following 107-residue polypeptide: Integration host factor subunit alpha (107 aa).

It belongs to the bacterial histone-like protein family. Heterodimer of an alpha and a beta chain.

This protein is one of the two subunits of integration host factor, a specific DNA-binding protein that functions in genetic recombination as well as in transcriptional and translational control. The protein is Integration host factor subunit alpha of Brucella anthropi (strain ATCC 49188 / DSM 6882 / CCUG 24695 / JCM 21032 / LMG 3331 / NBRC 15819 / NCTC 12168 / Alc 37) (Ochrobactrum anthropi).